The chain runs to 466 residues: Soluble pyridine nucleotide transhydrogenase (466 aa).

Residue 36–45 coordinates FAD; the sequence is ERYQNVGGGC.

The protein belongs to the class-I pyridine nucleotide-disulfide oxidoreductase family. Homooligomer; probable homooctamer. It depends on FAD as a cofactor.

It is found in the cytoplasm. It catalyses the reaction NAD(+) + NADPH = NADH + NADP(+). Functionally, conversion of NADPH, generated by peripheral catabolic pathways, to NADH, which can enter the respiratory chain for energy generation. The sequence is that of Soluble pyridine nucleotide transhydrogenase from Escherichia coli O6:H1 (strain CFT073 / ATCC 700928 / UPEC).